We begin with the raw amino-acid sequence, 361 residues long: MDKYELVKDIGAGNFGVARLMRVKNSKELVAMKYIERGPKIDENVAREIINHRSLRHPNIIRFKEVVLTPTHIAIAMEYAAGGELFERICSAGRFSEDEARYFFQQLISGVSYCHAMQICHRDLKLENTLLDGSPAPRLKICDFGYSKSSLLHSMPKSTVGTPAYIAPEVLSRGEYDGKMADVWSCGVTLYVMLVGAYPFEDQEDPKNFKKTIQRIMAVKYKIPDYVHISQDCKHLLSRIFVTNSNKRITIGDIKKHPWFLKNLPRELTEIAQAAYFRKENPTFSLQSVEEIMKIVEEAKTPARVSRSIGAFGWGGGEDAEGKEEDAEEEVEEVEEEEDEEDEYDKTVKQVHASMGEVRVS.

Residues 4–260 form the Protein kinase domain; it reads YELVKDIGAG…IGDIKKHPWF (257 aa). ATP contacts are provided by residues 10-18 and lysine 33; that span reads IGAGNFGVA. Residue aspartate 123 is the Proton acceptor of the active site. A Phosphoserine modification is found at serine 154. The disordered stretch occupies residues 311 to 361; sequence AFGWGGGEDAEGKEEDAEEEVEEVEEEEDEEDEYDKTVKQVHASMGEVRVS. The span at 318 to 344 shows a compositional bias: acidic residues; sequence EDAEGKEEDAEEEVEEVEEEEDEEDEY.

Belongs to the protein kinase superfamily. Ser/Thr protein kinase family. In terms of tissue distribution, expressed in seedlings.

The enzyme catalyses L-seryl-[protein] + ATP = O-phospho-L-seryl-[protein] + ADP + H(+). The catalysed reaction is L-threonyl-[protein] + ATP = O-phospho-L-threonyl-[protein] + ADP + H(+). In Arabidopsis thaliana (Mouse-ear cress), this protein is Serine/threonine-protein kinase SRK2B (SRK2B).